The sequence spans 304 residues: Protein Largen (304 aa).

Residues 1-22 show a composition bias toward low complexity; the sequence is MSAKSKGNPSSSSAAEGPPAAS. Disordered stretches follow at residues 1-27, 66-109, 114-133, and 236-304; these read MSAK…TKVK, QLED…PPAH, LTVL…TPVR, and EPVH…TTTV. A coiled-coil region spans residues 33 to 70; sequence IVEDLELVLGDLKDVAKELKEVVDQIDTLTSDLQLEDE. Residues 77–91 show a composition bias toward low complexity; the sequence is TDTLNSSSSGTTASS. Composition is skewed to pro residues over residues 120 to 129 and 275 to 289; these read PNPPPPPPRL and FPPP…PAAP.

Its function is as follows. Regulator of cell size that promotes cell size increase independently of mTOR and Hippo signaling pathways. Acts by stimulating the translation of specific mRNAs, including those encoding proteins affecting mitochondrial functions. Increases mitochondrial mass and respiration. The sequence is that of Protein Largen (Prr16) from Mus musculus (Mouse).